A 98-amino-acid polypeptide reads, in one-letter code: NADH-ubiquinone oxidoreductase chain 4L (98 aa).

3 helical membrane-spanning segments follow: residues 2–22 (TSAF…TFMF), 26–46 (LMST…MTST), and 59–79 (IPIT…ALLV).

This sequence belongs to the complex I subunit 4L family. Core subunit of respiratory chain NADH dehydrogenase (Complex I) which is composed of 45 different subunits.

Its subcellular location is the mitochondrion inner membrane. The catalysed reaction is a ubiquinone + NADH + 5 H(+)(in) = a ubiquinol + NAD(+) + 4 H(+)(out). Its function is as follows. Core subunit of the mitochondrial membrane respiratory chain NADH dehydrogenase (Complex I) which catalyzes electron transfer from NADH through the respiratory chain, using ubiquinone as an electron acceptor. Part of the enzyme membrane arm which is embedded in the lipid bilayer and involved in proton translocation. The chain is NADH-ubiquinone oxidoreductase chain 4L from Rattus norvegicus (Rat).